The chain runs to 544 residues: Chaperonin GroEL (544 aa).

Residues 29–32 (TLGP), 86–90 (DGTTT), G413, 477–479 (DVL), and D493 each bind ATP.

Belongs to the chaperonin (HSP60) family. In terms of assembly, forms a cylinder of 14 subunits composed of two heptameric rings stacked back-to-back. Interacts with the co-chaperonin GroES.

It localises to the cytoplasm. It catalyses the reaction ATP + H2O + a folded polypeptide = ADP + phosphate + an unfolded polypeptide.. Together with its co-chaperonin GroES, plays an essential role in assisting protein folding. The GroEL-GroES system forms a nano-cage that allows encapsulation of the non-native substrate proteins and provides a physical environment optimized to promote and accelerate protein folding. This is Chaperonin GroEL from Clostridium kluyveri (strain NBRC 12016).